The following is a 350-amino-acid chain: Transmembrane protein 185A (350 aa).

A run of 7 helical transmembrane segments spans residues 16-36 (LIYACLLLFSVLLALRLDGII), 41-61 (WAVFAPIWLWKLMVIVGASVG), 81-101 (FKAMLIAVGIHLLLLMFEVLV), 111-131 (FWLLVFMPLFFVSPVSVAACV), 177-197 (ILMSFLCLVVLYYIVWSVLFL), 211-231 (ITMALSWMTIVVPLLTFEILL), and 240-260 (AFSCIPIFVPLWLSLITLMAT). Residues 298–350 (DLHHEDNEETEETPVPEPPKIAPMFRKKARVVITQSPGKYALPPPKLNIEMPD) form a mediates interaction with MAP1B region.

It belongs to the TMEM185 family. Interacts with MAP1B.

It localises to the cell projection. The protein resides in the dendrite. The protein localises to the membrane. The sequence is that of Transmembrane protein 185A (TMEM185A) from Pongo abelii (Sumatran orangutan).